A 420-amino-acid polypeptide reads, in one-letter code: Gamma-glutamyl phosphate reductase (420 aa).

It belongs to the gamma-glutamyl phosphate reductase family.

Its subcellular location is the cytoplasm. The enzyme catalyses L-glutamate 5-semialdehyde + phosphate + NADP(+) = L-glutamyl 5-phosphate + NADPH + H(+). The protein operates within amino-acid biosynthesis; L-proline biosynthesis; L-glutamate 5-semialdehyde from L-glutamate: step 2/2. Catalyzes the NADPH-dependent reduction of L-glutamate 5-phosphate into L-glutamate 5-semialdehyde and phosphate. The product spontaneously undergoes cyclization to form 1-pyrroline-5-carboxylate. The chain is Gamma-glutamyl phosphate reductase from Shewanella amazonensis (strain ATCC BAA-1098 / SB2B).